The sequence spans 501 residues: Probable malate:quinone oxidoreductase (501 aa).

The protein belongs to the MQO family. Requires FAD as cofactor.

It catalyses the reaction (S)-malate + a quinone = a quinol + oxaloacetate. Its pathway is carbohydrate metabolism; tricarboxylic acid cycle; oxaloacetate from (S)-malate (quinone route): step 1/1. This is Probable malate:quinone oxidoreductase from Geobacillus kaustophilus (strain HTA426).